The following is a 546-amino-acid chain: Phosphatidylinositol 4-phosphate 5-kinase type-1 alpha (546 aa).

The PIPK domain occupies 66-434; that stretch reads TSSALKGAIQ…RFQRFMCNTV (369 aa). K88 participates in a covalent cross-link: Glycyl lysine isopeptide (Lys-Gly) (interchain with G-Cter in ubiquitin). Disordered stretches follow at residues 442-475 and 491-518; these read PSPTKKFRSGPSFSRRSGPSGNSCTSQLMASGEH and LGRPDVLPQTPPLEEISEGSPVPGPSFS. Composition is skewed to low complexity over residues 450 to 462 and 509 to 518; these read SGPSFSRRSGPSG and GSPVPGPSFS.

As to quaternary structure, interacts with RAC1. Interacts with TUT1. Forms a complex with CDH1/E-cadherin, CTNNB1/beta-catenin and CTNND1 at the plasma membrane upon calcium stimulation. Found in a ternary complex with IRS1 and DGKZ in the absence of insulin stimulation. Interacts with DGKZ. Interacts with PIP4K2C; the interaction inhibits PIP5K1A kinase activity. Highest expression in brain. Also detected in skeletal muscle, testis, brain and lung.

It localises to the cell membrane. The protein resides in the cytoplasm. It is found in the nucleus. The protein localises to the nucleus speckle. Its subcellular location is the cell projection. It localises to the ruffle. The protein resides in the lamellipodium. It carries out the reaction a 1,2-diacyl-sn-glycero-3-phospho-(1D-myo-inositol 4-phosphate) + ATP = a 1,2-diacyl-sn-glycero-3-phospho-(1D-myo-inositol-4,5-bisphosphate) + ADP + H(+). The catalysed reaction is 1-octadecanoyl-2-(5Z,8Z,11Z,14Z)-eicosatetraenoyl-sn-glycero-3-phospho-1D-myo-inositol 4-phosphate + ATP = 1-octadecanoyl-2-(5Z,8Z,11Z,14Z)-eicosatetraenoyl-sn-glycero-3-phospho-1D-myo-inositol 4,5-bisphosphate + ADP + H(+). It catalyses the reaction 1,2-dihexadecanoyl-sn-glycero-3-phospho-(1D-myo-inositol-4-phosphate) + ATP = 1,2-dihexadecanoyl-sn-glycero-3-phospho-(1D-myo-inositol-4,5-bisphosphate) + ADP + H(+). The enzyme catalyses 1-octadecanoyl-2-(9Z)-octadecenoyl-sn-glycero-3-phospho-1D-myo-inositol 4-phosphate + ATP = 1-octadecanoyl-2-(9Z)-octadecenoyl-sn-glycero-3-phospho-1D-myo-inositol 4,5-bisphosphate + ADP + H(+). It carries out the reaction 1-octadecanoyl-2-(9Z)-octadecenoyl-sn-glycero-3-phospho-1D-myo-inositol + ATP = 1-octadecanoyl-2-(9Z)-octadecenoyl-sn-glycero-3-phospho-1D-myo-inositol 5-phosphate + ADP + H(+). The catalysed reaction is 1-octadecanoyl-2-(9Z,12Z)-octadecadienoyl-sn-glycero-3-phospho-1D-myo-inositol + ATP = 1-octadecanoyl-2-(9Z,12Z)-octadecadienoyl-sn-glycero-3-phospho-1D-myo-inositol 5-phosphate + ADP + H(+). It catalyses the reaction 1-octadecanoyl-2-(5Z,8Z,11Z,14Z-eicosatetraenoyl)-sn-glycero-3-phospho-(1D-myo-inositol) + ATP = 1-octadecanoyl-2-(5Z,8Z,11Z,14Z)-eicosatetraenoyl-sn-glycero-3-phospho-1D-myo-inositol 5-phosphate + ADP + H(+). The enzyme catalyses 1,2-di-(9Z,12Z)-octadecadienoyl-sn-glycero-3-phospho-1D-myo-inositol + ATP = 1,2-di(9Z,12Z)-octadecadienoyl-sn-glycero-3-phospho-1D-myo-inositol 5-phosphate + ADP + H(+). With respect to regulation, activated by phosphatidic acid. In terms of biological role, catalyzes the phosphorylation of phosphatidylinositol 4-phosphate (PtdIns(4)P/PI4P) to form phosphatidylinositol 4,5-bisphosphate (PtdIns(4,5)P2/PIP2), a lipid second messenger that regulates several cellular processes such as signal transduction, vesicle trafficking, actin cytoskeleton dynamics, cell adhesion, and cell motility. PtdIns(4,5)P2 can directly act as a second messenger or can be utilized as a precursor to generate other second messengers: inositol 1,4,5-trisphosphate (IP3), diacylglycerol (DAG) or phosphatidylinositol-3,4,5-trisphosphate (PtdIns(3,4,5)P3/PIP3). PIP5K1A-mediated phosphorylation of PtdIns(4)P is the predominant pathway for PtdIns(4,5)P2 synthesis. Can also use phosphatidylinositol (PtdIns) as substrate in vitro. Together with PIP5K1C, is required for phagocytosis, both enzymes regulating different types of actin remodeling at sequential steps. Promotes particle ingestion by activating the WAS GTPase-binding protein that induces Arp2/3 dependent actin polymerization at the nascent phagocytic cup. Together with PIP5K1B, is required, after stimulation by G-protein coupled receptors, for the synthesis of IP3 that will induce stable platelet adhesion. Recruited to the plasma membrane by the E-cadherin/beta-catenin complex where it provides the substrate PtdIns(4,5)P2 for the production of PtdIns(3,4,5)P3, IP3 and DAG, that will mobilize internal calcium and drive keratinocyte differentiation. Positively regulates insulin-induced translocation of SLC2A4 to the cell membrane in adipocytes. Together with PIP5K1C has a role during embryogenesis. Independently of its catalytic activity, is required for membrane ruffling formation, actin organization and focal adhesion formation during directional cell migration by controlling integrin-induced translocation of the small GTPase RAC1 to the plasma membrane. Also functions in the nucleus where it acts as an activator of TUT1 adenylyltransferase activity in nuclear speckles, thereby regulating mRNA polyadenylation of a select set of mRNAs. The chain is Phosphatidylinositol 4-phosphate 5-kinase type-1 alpha from Mus musculus (Mouse).